We begin with the raw amino-acid sequence, 305 residues long: Methionyl-tRNA formyltransferase (305 aa).

111-114 (SLLP) contributes to the (6S)-5,6,7,8-tetrahydrofolate binding site.

The protein belongs to the Fmt family.

It carries out the reaction L-methionyl-tRNA(fMet) + (6R)-10-formyltetrahydrofolate = N-formyl-L-methionyl-tRNA(fMet) + (6S)-5,6,7,8-tetrahydrofolate + H(+). Attaches a formyl group to the free amino group of methionyl-tRNA(fMet). The formyl group appears to play a dual role in the initiator identity of N-formylmethionyl-tRNA by promoting its recognition by IF2 and preventing the misappropriation of this tRNA by the elongation apparatus. This is Methionyl-tRNA formyltransferase from Campylobacter jejuni (strain RM1221).